An 83-amino-acid chain; its full sequence is Apolipoprotein C-I, basic form (83 aa).

An N-terminal signal peptide occupies residues 1–26 (MRLFLSLPVLVVVLSMVLEGPAPVQG).

The protein belongs to the apolipoprotein C1 family.

It localises to the secreted. Inhibitor of lipoprotein binding to the low density lipoprotein (LDL) receptor, LDL receptor-related protein, and very low density lipoprotein (VLDL) receptor. Associates with high density lipoproteins (HDL) and the triacylglycerol-rich lipoproteins in the plasma and makes up about 10% of the protein of the VLDL and 2% of that of HDL. Appears to interfere directly with fatty acid uptake and is also the major plasma inhibitor of cholesteryl ester transfer protein (CETP). Binds free fatty acids and reduces their intracellular esterification. Modulates the interaction of APOE with beta-migrating VLDL and inhibits binding of beta-VLDL to the LDL receptor-related protein. This is Apolipoprotein C-I, basic form (APOC1) from Papio anubis (Olive baboon).